Here is a 352-residue protein sequence, read N- to C-terminus: MTFEEAINSIKELNIETMQKAQKRLDNLTKPLGSLGRLEEIVKQLAGITGELFPCVKNKKIVIMCADNGVVEEGVSSCPKSVTSSVTQNFLKGFTGVNVLSRHSRADIVVVDVGVDDDIDCPGVINRKIRKGTWNIMKGPAMTRNEAIKAIETGIEIVGKLKEKGVNLLGTGEMGVGNTTTSSAVASVLIGNDIGEMVGKGAGLTQKGLINKIEIIKNAIDINKPNPSDPIDVLAKVGGFDIAALTGCFLGAAAYRLPVMIDGFISATAALAAIKIKPECRNYILPSHGSAEPGNKKIMEALDMSPMLLLEMRLGEGSGAALAFHIIDAAVAAYNEMGTFGDAKIEQYKPLE.

The Proton acceptor role is filled by E316.

Belongs to the CobT family.

The enzyme catalyses 5,6-dimethylbenzimidazole + nicotinate beta-D-ribonucleotide = alpha-ribazole 5'-phosphate + nicotinate + H(+). Its pathway is nucleoside biosynthesis; alpha-ribazole biosynthesis; alpha-ribazole from 5,6-dimethylbenzimidazole: step 1/2. In terms of biological role, catalyzes the synthesis of alpha-ribazole-5'-phosphate from nicotinate mononucleotide (NAMN) and 5,6-dimethylbenzimidazole (DMB). The chain is Nicotinate-nucleotide--dimethylbenzimidazole phosphoribosyltransferase from Ruminiclostridium cellulolyticum (strain ATCC 35319 / DSM 5812 / JCM 6584 / H10) (Clostridium cellulolyticum).